Reading from the N-terminus, the 181-residue chain is Probable RNA 2'-phosphotransferase (181 aa).

The protein belongs to the KptA/TPT1 family.

In terms of biological role, removes the 2'-phosphate from RNA via an intermediate in which the phosphate is ADP-ribosylated by NAD followed by a presumed transesterification to release the RNA and generate ADP-ribose 1''-2''-cyclic phosphate (APPR&gt;P). May function as an ADP-ribosylase. The polypeptide is Probable RNA 2'-phosphotransferase (Acaryochloris marina (strain MBIC 11017)).